Consider the following 453-residue polypeptide: Fibrinogen gamma chain (453 aa).

Residues 1–26 (MSWSLHPRNLILYFYALLFLSSTCVA) form the signal peptide. Serine 68 bears the Phosphoserine; by FAM20C mark. A glycan (N-linked (GlcNAc...) (complex) asparagine) is linked at asparagine 78. Residues 170–416 (QIHDITGKDC…KTTMKIIPFN (247 aa)) form the Fibrinogen C-terminal domain. Residues cysteine 179 and cysteine 208 are joined by a disulfide bond. N-linked (GlcNAc...) asparagine; in variant Asahi glycosylation occurs at asparagine 334. Ca(2+)-binding residues include aspartate 344, aspartate 346, phenylalanine 348, and glycine 350. Cysteine 352 and cysteine 365 are oxidised to a cystine. The tract at residues 400-422 (TRWYSMKKTTMKIIPFNRLTIGE) is gamma-chain polymerization, binding amino end of another fibrin alpha chain. Positions 423–437 (GQQHHLGGAKQVRPE) are platelet aggregation and Staphylococcus clumping. An Isoglutamyl lysine isopeptide (Gln-Lys) (interchain with K-432) cross-link involves residue glutamine 424. Residues 424–453 (QQHHLGGAKQVRPEHPAETEYDSLYPEDDL) form a disordered region. Lysine 432 participates in a covalent cross-link: Isoglutamyl lysine isopeptide (Lys-Gln) (interchain with Q-424). The segment covering 442–453 (TEYDSLYPEDDL) has biased composition (acidic residues). Sulfotyrosine occurs at positions 444 and 448.

In terms of assembly, heterohexamer; disulfide linked. Contains 2 sets of 3 non-identical chains (alpha, beta and gamma). The 2 heterotrimers are in head to head conformation with the N-termini in a small central domain. Conversion of fibrinogen to fibrin is triggered by thrombin, which cleaves fibrinopeptides A and B from alpha and beta chains, and thus exposes the N-terminal polymerization sites responsible for the formation of the soft clot. The soft clot is converted into the hard clot by factor XIIIA which catalyzes the epsilon-(gamma-glutamyl)lysine cross-linking between gamma chains (stronger) and between alpha chains (weaker) of different monomers. Post-translationally, sulfation of C-terminal tyrosines increases affinity for thrombin. In terms of tissue distribution, detected in blood plasma (at protein level).

The protein resides in the secreted. Functionally, together with fibrinogen alpha (FGA) and fibrinogen beta (FGB), polymerizes to form an insoluble fibrin matrix. Has a major function in hemostasis as one of the primary components of blood clots. In addition, functions during the early stages of wound repair to stabilize the lesion and guide cell migration during re-epithelialization. Was originally thought to be essential for platelet aggregation, based on in vitro studies using anticoagulated blood. However, subsequent studies have shown that it is not absolutely required for thrombus formation in vivo. Enhances expression of SELP in activated platelets via an ITGB3-dependent pathway. Maternal fibrinogen is essential for successful pregnancy. Fibrin deposition is also associated with infection, where it protects against IFNG-mediated hemorrhage. May also facilitate the antibacterial immune response via both innate and T-cell mediated pathways. The chain is Fibrinogen gamma chain (FGG) from Homo sapiens (Human).